The primary structure comprises 417 residues: Serine hydroxymethyltransferase 4 (417 aa).

(6S)-5,6,7,8-tetrahydrofolate-binding positions include Leu-121 and 125–127 (GHL). Position 230 is an N6-(pyridoxal phosphate)lysine (Lys-230). 355–357 (SPF) is a binding site for (6S)-5,6,7,8-tetrahydrofolate.

This sequence belongs to the SHMT family. Homodimer. The cofactor is pyridoxal 5'-phosphate.

It is found in the cytoplasm. The catalysed reaction is (6R)-5,10-methylene-5,6,7,8-tetrahydrofolate + glycine + H2O = (6S)-5,6,7,8-tetrahydrofolate + L-serine. It participates in one-carbon metabolism; tetrahydrofolate interconversion. It functions in the pathway amino-acid biosynthesis; glycine biosynthesis; glycine from L-serine: step 1/1. In terms of biological role, catalyzes the reversible interconversion of serine and glycine with tetrahydrofolate (THF) serving as the one-carbon carrier. This reaction serves as the major source of one-carbon groups required for the biosynthesis of purines, thymidylate, methionine, and other important biomolecules. Also exhibits THF-independent aldolase activity toward beta-hydroxyamino acids, producing glycine and aldehydes, via a retro-aldol mechanism. The chain is Serine hydroxymethyltransferase 4 from Colwellia psychrerythraea (strain 34H / ATCC BAA-681) (Vibrio psychroerythus).